The primary structure comprises 153 residues: UPF0178 protein Ccel_2994 (153 aa).

Belongs to the UPF0178 family.

The polypeptide is UPF0178 protein Ccel_2994 (Ruminiclostridium cellulolyticum (strain ATCC 35319 / DSM 5812 / JCM 6584 / H10) (Clostridium cellulolyticum)).